The sequence spans 420 residues: Histidine--tRNA ligase (420 aa).

This sequence belongs to the class-II aminoacyl-tRNA synthetase family. In terms of assembly, homodimer.

Its subcellular location is the cytoplasm. The catalysed reaction is tRNA(His) + L-histidine + ATP = L-histidyl-tRNA(His) + AMP + diphosphate + H(+). The protein is Histidine--tRNA ligase of Clostridioides difficile (strain 630) (Peptoclostridium difficile).